We begin with the raw amino-acid sequence, 121 residues long: Large ribosomal subunit protein uL18 (121 aa).

It belongs to the universal ribosomal protein uL18 family. As to quaternary structure, part of the 50S ribosomal subunit; part of the 5S rRNA/L5/L18/L25 subcomplex. Contacts the 5S and 23S rRNAs.

This is one of the proteins that bind and probably mediate the attachment of the 5S RNA into the large ribosomal subunit, where it forms part of the central protuberance. This chain is Large ribosomal subunit protein uL18, found in Streptococcus thermophilus (strain CNRZ 1066).